Here is a 357-residue protein sequence, read N- to C-terminus: ATP-dependent 6-phosphofructokinase (357 aa).

Residues Gly12, 80–81 (KG), and 107–110 (GDGS) each bind ATP. A Mg(2+)-binding site is contributed by Asp108. Substrate is bound by residues 131 to 133 (TID), Arg168, 175 to 177 (MGR), Glu229, Arg272, and 278 to 281 (HIQR). The active-site Proton acceptor is Asp133.

It belongs to the phosphofructokinase type A (PFKA) family. Mixed-substrate PFK group III subfamily. Homodimer or homotetramer. The cofactor is Mg(2+).

The protein resides in the cytoplasm. It carries out the reaction beta-D-fructose 6-phosphate + ATP = beta-D-fructose 1,6-bisphosphate + ADP + H(+). The protein operates within carbohydrate degradation; glycolysis; D-glyceraldehyde 3-phosphate and glycerone phosphate from D-glucose: step 3/4. Subject to allosteric activation by ADP and other diphosphonucleosides, and inhibition by phosphoenolpyruvate. Functionally, catalyzes the phosphorylation of D-fructose 6-phosphate to fructose 1,6-bisphosphate by ATP, the first committing step of glycolysis. The polypeptide is ATP-dependent 6-phosphofructokinase (Trichormus variabilis (strain ATCC 29413 / PCC 7937) (Anabaena variabilis)).